The following is a 473-amino-acid chain: Flavin-dependent L-tryptophan oxidase RebO (473 aa).

Positions 1-21 are cleaved as a signal peptide; the sequence is MSRGHKKITVLGAGVAGLVAA. Residues 15–16, 35–36, Arg43, 61–64, Glu444, and 451–456 contribute to the FAD site; these read VA, EG, GAMR, and AWIDGA.

It belongs to the flavin monoamine oxidase family. RebO subfamily. Homodimer. The cofactor is FAD.

It catalyses the reaction 7-chloro-L-tryptophan + O2 = 3-(7-chloroindol-3-yl)-2-iminopropanoate + H2O2. The enzyme catalyses L-tryptophan + O2 = 2-iminio-3-(indol-3-yl)propanoate + H2O2. In terms of biological role, involved in the biosynthesis of the indolocarbazole antitumor agent rebeccamycin. It generates the imine form of 7-chloroindole 3-pyruvate (7Cl-IPA) from 7-chloro-L-tryptophan (7Cl-Trp), with concomitant two-electron reduction of O(2) to H(2)O(2). The enzyme is also active with L-tryptophan as substrate. In Lentzea aerocolonigenes (Lechevalieria aerocolonigenes), this protein is Flavin-dependent L-tryptophan oxidase RebO (rebO).